We begin with the raw amino-acid sequence, 318 residues long: Protein-methionine-sulfoxide reductase catalytic subunit MsrP (318 aa).

The segment at residues methionine 1–alanine 40 is a signal peptide (tat-type signal). Residues asparagine 72, tyrosine 75–glutamate 76, cysteine 130, threonine 165, asparagine 217, arginine 222, and serine 233–lysine 235 each bind Mo-molybdopterin.

The protein belongs to the MsrP family. Heterodimer of a catalytic subunit (MsrP) and a heme-binding subunit (MsrQ). Mo-molybdopterin serves as cofactor. In terms of processing, predicted to be exported by the Tat system. The position of the signal peptide cleavage has not been experimentally proven.

It localises to the periplasm. It catalyses the reaction L-methionyl-[protein] + a quinone + H2O = L-methionyl-(S)-S-oxide-[protein] + a quinol. It carries out the reaction L-methionyl-[protein] + a quinone + H2O = L-methionyl-(R)-S-oxide-[protein] + a quinol. In terms of biological role, part of the MsrPQ system that repairs oxidized periplasmic proteins containing methionine sulfoxide residues (Met-O), using respiratory chain electrons. Thus protects these proteins from oxidative-stress damage caused by reactive species of oxygen and chlorine generated by the host defense mechanisms. MsrPQ is essential for the maintenance of envelope integrity under bleach stress, rescuing a wide series of structurally unrelated periplasmic proteins from methionine oxidation. The catalytic subunit MsrP is non-stereospecific, being able to reduce both (R-) and (S-) diastereoisomers of methionine sulfoxide. This Haemophilus ducreyi (strain 35000HP / ATCC 700724) protein is Protein-methionine-sulfoxide reductase catalytic subunit MsrP.